A 65-amino-acid polypeptide reads, in one-letter code: Peptide ToAcP (65 aa).

Residues 1–24 (MKMKMIVVISILLIVFSLSSKAMS) form the signal peptide. Residues 25-34 (LEDEQESVQR) constitute a propeptide that is removed on maturation. Alanine 58 is modified (alanine amide). A propeptide spanning residues 59–65 (GRFDPAV) is cleaved from the precursor.

Expressed by the venom gland.

The protein localises to the secreted. Its function is as follows. Helical wheel projections predict no hydrophobic face, suggesting a non-amphipathic peptide. Does not show antifungal activity. This Tityus obscurus (Amazonian scorpion) protein is Peptide ToAcP.